The following is a 601-amino-acid chain: Terpenoid synthase 17 (601 aa).

Asn354, Asp358, Asn497, Thr501, and Glu505 together coordinate Mg(2+). A DDXXD motif; degenerate motif is present at residues 354–358 (NDTCD).

It belongs to the terpene synthase family. Tpsa subfamily. Mg(2+) serves as cofactor. The cofactor is Mn(2+). As to expression, expressed exclusively in flowers.

The protein localises to the cytoplasm. It functions in the pathway secondary metabolite biosynthesis; terpenoid biosynthesis. This is Terpenoid synthase 17 (TPS17) from Arabidopsis thaliana (Mouse-ear cress).